The sequence spans 933 residues: Melanoma-associated antigen E1 (933 aa).

Disordered stretches follow at residues 1 to 113 (MSLV…VSAG), 149 to 236 (GASI…GINL), 256 to 282 (SDISVPPPSAEGLSTSMPPPSGEVQST), and 360 to 393 (TSGLHDLEEESSISQMPLAAEGPSASGSSIEDEN). A compositionally biased stretch (basic residues) spans 8-23 (SRRRRGGRANGRKNSG). Polar residues-rich tracts occupy residues 64-97 (GGSSTSVPPTASEGSSAPGQLITSEGRNTSQLPT), 149-166 (GASISEQPQSHEGPNVQP), 173-184 (GTSVPPTFSEES), and 219-236 (APSTSVPPTASNGLGINL). 2 MAGE domains span residues 467–666 (MEQN…YNEA) and 721–912 (LESK…YREA). The interval 719 to 933 (SRLESKSRKL…RRPLVVRNLR (215 aa)) is interaction with DTNA.

As to quaternary structure, interacts with DTNA. Interacts with TRIM28.

It is found in the cytoplasm. The protein resides in the perinuclear region. It localises to the nucleus. The protein localises to the cell membrane. In terms of biological role, may enhance ubiquitin ligase activity of RING-type zinc finger-containing E3 ubiquitin-protein ligases. Proposed to act through recruitment and/or stabilization of the Ubl-conjugating enzyme (E2) at the E3:substrate complex. The chain is Melanoma-associated antigen E1 (Magee1) from Rattus norvegicus (Rat).